The primary structure comprises 63 residues: Large ribosomal subunit protein bL35 (63 aa).

This sequence belongs to the bacterial ribosomal protein bL35 family.

In Campylobacter jejuni subsp. doylei (strain ATCC BAA-1458 / RM4099 / 269.97), this protein is Large ribosomal subunit protein bL35.